We begin with the raw amino-acid sequence, 208 residues long: Small ribosomal subunit protein uS4 (208 aa).

A disordered region spans residues 32–53 (LNRKRGKNSPGQHGASKVKMSD). One can recognise an S4 RNA-binding domain in the interval 99 to 161 (LRLDNVVYRL…YKSNVIIKKL (63 aa)).

It belongs to the universal ribosomal protein uS4 family. As to quaternary structure, part of the 30S ribosomal subunit. Contacts protein S5. The interaction surface between S4 and S5 is involved in control of translational fidelity.

Its function is as follows. One of the primary rRNA binding proteins, it binds directly to 16S rRNA where it nucleates assembly of the body of the 30S subunit. In terms of biological role, with S5 and S12 plays an important role in translational accuracy. The chain is Small ribosomal subunit protein uS4 from Endomicrobium trichonymphae.